The primary structure comprises 571 residues: Proline--tRNA ligase (571 aa).

This sequence belongs to the class-II aminoacyl-tRNA synthetase family. ProS type 1 subfamily. Homodimer.

Its subcellular location is the cytoplasm. The enzyme catalyses tRNA(Pro) + L-proline + ATP = L-prolyl-tRNA(Pro) + AMP + diphosphate. Its function is as follows. Catalyzes the attachment of proline to tRNA(Pro) in a two-step reaction: proline is first activated by ATP to form Pro-AMP and then transferred to the acceptor end of tRNA(Pro). As ProRS can inadvertently accommodate and process non-cognate amino acids such as alanine and cysteine, to avoid such errors it has two additional distinct editing activities against alanine. One activity is designated as 'pretransfer' editing and involves the tRNA(Pro)-independent hydrolysis of activated Ala-AMP. The other activity is designated 'posttransfer' editing and involves deacylation of mischarged Ala-tRNA(Pro). The misacylated Cys-tRNA(Pro) is not edited by ProRS. The polypeptide is Proline--tRNA ligase (Pseudomonas syringae pv. syringae (strain B728a)).